The chain runs to 576 residues: (+)-alpha-terpineol synthase (576 aa).

The (2E)-geranyl diphosphate site is built by R286, D323, D327, R466, and N469. The Mg(2+) site is built by D323 and D327. The short motif at 323–327 (DDVYD) is the DDXXD motif element. Residues N469, T473, and E477 each coordinate Mg(2+).

This sequence belongs to the terpene synthase family. Tpsb subfamily. Requires Mg(2+) as cofactor. Mn(2+) is required as a cofactor.

It catalyses the reaction (2E)-geranyl diphosphate + H2O = (R)-alpha-terpineol + diphosphate. Functionally, monoterpene synthase producing mainly (+)-alpha-terpineol (44%) and (-)-limonene (33.6%) and lower amounts of (E)-geraniol (5.9%), linalool (5.0%), myrcene (3.4%), (-)-alpha-pinene (3.3%), (+)-sabinene (3.0%) and alpha-terpinolene (1.6%). In Santalum album (White sandalwood), this protein is (+)-alpha-terpineol synthase.